Reading from the N-terminus, the 438-residue chain is MELATRSQIPKEVADIFNAPSDDEEFVGFQDDVPMENLSESCGSLDSLELEKQNACLHSKYFTEELRRIFKEDTDSDNEDFEGFTESELNIGSNPELIESELSDGDKTHPMMSDEEDDDDEEEAAPRRGRQSTRSSFGLRVAFQFPTKKTAKTPDKNSPHLLGGKTDLRREKSCRQPKEKEDSASDAEDESRAESQETSDALLKRAMNIKENKAMLAQLLAELNSVPDFFPVRTPPSASRRRTPRRAFSEGQITRRVNPTRSARPPEKFALENFTFSATKLTEELYSFRRRKTISGGKCQKYRRHRISSFRSVKDITEEELENIAITVRDKVYDKVLGNTCHQCRQKTIDTKTVCRNQGCGGVRGQFCGPCLRNRYGEDVRTALLDPKWTCPPCRGICNCSYCRRRDGRCATGILIHLAKFYGYDNVKEYLESLQKQL.

An Integrase domain-binding motif 1 (IBM1) motif is present at residues 9-33 (IPKEVADIFNAPSDDEEFVGFQDDV). Residue Ser-21 is modified to Phosphoserine. The segment at 55-114 (ACLHSKYFTEELRRIFKEDTDSDNEDFEGFTESELNIGSNPELIESELSDGDKTHPMMSD) is PSIP1-binding. The Integrase domain-binding motif 2 (IBM2) signature appears at 62–88 (FTEELRRIFKEDTDSDNEDFEGFTESE). Residues 72-199 (EDTDSDNEDF…ESRAESQETS (128 aa)) are disordered. Thr-74 carries the post-translational modification Phosphothreonine. Residues 74-85 (TDSDNEDFEGFT) are compositionally biased toward acidic residues. A Phosphoserine modification is found at Ser-76. Position 85 is a phosphothreonine (Thr-85). Ser-100, Ser-103, Ser-113, Ser-135, Ser-136, Ser-183, and Ser-185 each carry phosphoserine. The segment covering 113–123 (SDEEDDDDEEE) has biased composition (acidic residues). A compositionally biased stretch (basic and acidic residues) spans 166–183 (TDLRREKSCRQPKEKEDS). Residues 201–223 (ALLKRAMNIKENKAMLAQLLAEL) are MYC-binding. Residues Lys-210 and Lys-213 each participate in a glycyl lysine isopeptide (Lys-Gly) (interchain with G-Cter in SUMO2) cross-link. Residue Ser-249 is modified to Phosphoserine.

As to quaternary structure, interacts with MYC. Interacts (via IBM motifs) with PSIP1 (via IBD domain); phosphorylation increases its affinity for PSIP1. Phosphorylation increases its interaction with PSIP1.

The protein resides in the cytoplasm. The protein localises to the nucleus. Its function is as follows. Plays a role in transcriptional regulation as a repressor that inhibits monoamine oxidase A (MAOA) activity and gene expression by binding to the promoter. Plays an important oncogenic role in mediating the full transforming effect of MYC in medulloblastoma cells. Involved in apoptotic signaling pathways; May act downstream of P38-kinase and BCL-2, but upstream of CASP3/caspase-3 as well as CCND1/cyclin D1 and E2F1. The chain is Cell division cycle-associated 7-like protein (Cdca7l) from Rattus norvegicus (Rat).